The primary structure comprises 521 residues: Acetyl-CoA hydrolase (521 aa).

Position 276–280 (276–280 (GIGNI)) interacts with CoA. The active-site 5-glutamyl coenzyme A thioester intermediate is Glu301. CoA-binding residues include Asn391 and Gly395.

This sequence belongs to the acetyl-CoA hydrolase/transferase family.

Its subcellular location is the cytoplasm. The enzyme catalyses acetyl-CoA + H2O = acetate + CoA + H(+). Presumably involved in regulating the intracellular acetyl-CoA pool for fatty acid and cholesterol synthesis and fatty acid oxidation. The protein is Acetyl-CoA hydrolase (ach1) of Schizosaccharomyces pombe (strain 972 / ATCC 24843) (Fission yeast).